Reading from the N-terminus, the 255-residue chain is Small ribosomal subunit protein eS4 (255 aa).

One can recognise an S4 RNA-binding domain in the interval isoleucine 44–proline 107.

This sequence belongs to the eukaryotic ribosomal protein eS4 family.

The polypeptide is Small ribosomal subunit protein eS4 (Ignicoccus hospitalis (strain KIN4/I / DSM 18386 / JCM 14125)).